A 226-amino-acid chain; its full sequence is 3-dehydroquinate dehydratase (226 aa).

Residues 30 to 32 (EWR) and arginine 62 contribute to the 3-dehydroquinate site. Histidine 118 serves as the catalytic Proton donor/acceptor. Lysine 143 serves as the catalytic Schiff-base intermediate with substrate. 3-dehydroquinate-binding residues include arginine 186, serine 205, and glutamine 209.

Belongs to the type-I 3-dehydroquinase family. In terms of assembly, homodimer.

The enzyme catalyses 3-dehydroquinate = 3-dehydroshikimate + H2O. Its pathway is metabolic intermediate biosynthesis; chorismate biosynthesis; chorismate from D-erythrose 4-phosphate and phosphoenolpyruvate: step 3/7. Functionally, involved in the third step of the chorismate pathway, which leads to the biosynthesis of aromatic amino acids. Catalyzes the cis-dehydration of 3-dehydroquinate (DHQ) and introduces the first double bond of the aromatic ring to yield 3-dehydroshikimate. The polypeptide is 3-dehydroquinate dehydratase (Streptococcus equi subsp. zooepidemicus (strain H70)).